Here is an 842-residue protein sequence, read N- to C-terminus: Follistatin-related protein 4 (842 aa).

Positions 1-22 (MKPGGFWLHLTLLGASLPAALG) are cleaved as a signal peptide. Positions 81–135 (KTGEPECQCLEACRPSYVPVCGSDGRFYENHCKLHRAACLLGKRITVIHSKDCFL) constitute a Kazal-like domain. Cystine bridges form between Cys-87/Cys-119, Cys-93/Cys-112, and Cys-101/Cys-133. Positions 174–209 (QKRLLVESLFRDLDADGNGHLSSSELAQHVLKKQDL) constitute an EF-hand domain. Ca(2+) contacts are provided by Asp-187, Asp-189, Asn-191, His-193, and Glu-198. Ig-like domains are found at residues 251–338 (PEDR…LQVN) and 341–426 (PVIR…EDIS). Cystine bridges form between Cys-270–Cys-321 and Cys-362–Cys-413. Asn-318 carries N-linked (GlcNAc...) asparagine glycosylation.

It is found in the secreted. This Homo sapiens (Human) protein is Follistatin-related protein 4 (FSTL4).